Reading from the N-terminus, the 450-residue chain is UDP-N-acetylmuramoylalanine--D-glutamate ligase (450 aa).

119–125 (GSNGKTT) contacts ATP.

Belongs to the MurCDEF family.

Its subcellular location is the cytoplasm. It carries out the reaction UDP-N-acetyl-alpha-D-muramoyl-L-alanine + D-glutamate + ATP = UDP-N-acetyl-alpha-D-muramoyl-L-alanyl-D-glutamate + ADP + phosphate + H(+). It functions in the pathway cell wall biogenesis; peptidoglycan biosynthesis. Its function is as follows. Cell wall formation. Catalyzes the addition of glutamate to the nucleotide precursor UDP-N-acetylmuramoyl-L-alanine (UMA). This Bacillus anthracis (strain A0248) protein is UDP-N-acetylmuramoylalanine--D-glutamate ligase.